Reading from the N-terminus, the 159-residue chain is Phosphopantetheine adenylyltransferase (159 aa).

Threonine 10 is a substrate binding site. Residues 10–11 (TF) and histidine 18 contribute to the ATP site. Substrate is bound by residues lysine 42, methionine 74, and arginine 88. Residues 89–91 (GLR), glutamate 99, and 124–130 (WSFISSS) contribute to the ATP site.

Belongs to the bacterial CoaD family. Homohexamer. It depends on Mg(2+) as a cofactor.

The protein localises to the cytoplasm. The enzyme catalyses (R)-4'-phosphopantetheine + ATP + H(+) = 3'-dephospho-CoA + diphosphate. It functions in the pathway cofactor biosynthesis; coenzyme A biosynthesis; CoA from (R)-pantothenate: step 4/5. Reversibly transfers an adenylyl group from ATP to 4'-phosphopantetheine, yielding dephospho-CoA (dPCoA) and pyrophosphate. The protein is Phosphopantetheine adenylyltransferase of Salmonella agona (strain SL483).